We begin with the raw amino-acid sequence, 306 residues long: uncharacterized protein (306 aa).

It to M.jannaschii MJ0658.

This is an uncharacterized protein from Methanothermobacter thermautotrophicus (strain ATCC 29096 / DSM 1053 / JCM 10044 / NBRC 100330 / Delta H) (Methanobacterium thermoautotrophicum).